Here is a 166-residue protein sequence, read N- to C-terminus: Interferon gamma (166 aa).

A signal peptide spans 1-23 (MNYTSYILAFQLCVILCSSGYYC). Glutamine 24 is modified (pyrrolidone carboxylic acid). Residues asparagine 39 and asparagine 106 are each glycosylated (N-linked (GlcNAc...) asparagine).

This sequence belongs to the type II (or gamma) interferon family. Homodimer. Interacts with IFNGR1 (via extracellular domain); this interaction promotes IFNGR1 dimerization. As to expression, released primarily from activated T lymphocytes.

The protein localises to the secreted. Functionally, type II interferon produced by immune cells such as T-cells and NK cells that plays crucial roles in antimicrobial, antiviral, and antitumor responses by activating effector immune cells and enhancing antigen presentation. Primarily signals through the JAK-STAT pathway after interaction with its receptor IFNGR1 to affect gene regulation. Upon IFNG binding, IFNGR1 intracellular domain opens out to allow association of downstream signaling components JAK2, JAK1 and STAT1, leading to STAT1 activation, nuclear translocation and transcription of IFNG-regulated genes. Many of the induced genes are transcription factors such as IRF1 that are able to further drive regulation of a next wave of transcription. Plays a role in class I antigen presentation pathway by inducing a replacement of catalytic proteasome subunits with immunoproteasome subunits. In turn, increases the quantity, quality, and repertoire of peptides for class I MHC loading. Increases the efficiency of peptide generation also by inducing the expression of activator PA28 that associates with the proteasome and alters its proteolytic cleavage preference. Up-regulates as well MHC II complexes on the cell surface by promoting expression of several key molecules such as cathepsins B/CTSB, H/CTSH, and L/CTSL. Participates in the regulation of hematopoietic stem cells during development and under homeostatic conditions by affecting their development, quiescence, and differentiation. This chain is Interferon gamma (IFNG), found in Ailuropoda melanoleuca (Giant panda).